Here is a 396-residue protein sequence, read N- to C-terminus: MGFWSLLEVASMPVIQVLFMSLVGAFMASDRCKLFPVEARNSMNKVVFVLFAPALMFANLAQTVTLEDIISWWFMPVNMGLTFLIGGLLGWLVVKILKPPPYLEGLIVATCSAGNMGNLPIILVPAICDEDKSPFGNRSVCRTVGLSYASFSMALGGFYIWTYTFRLIKGSAMKVQAIEESEKIAIKSSNSDLEADHKTHLLGAPEDKENKVVKEKTGFWRKGVDFLHEILEELLAPPTLGAIIGFIFGAVRWLRNLIIGDDAPLRIVQSTAKLLGDGTIPCMTIILGGNLIQGLRSSAVKPMVVLGIVCVRYIAMPIIGIGIVLTAANLGFLPADPLFQYVLMLQFTLPPAMNIGTMTQLYNVAQDECSVLMLWTYLVAILALTVWSTIFLHLLV.

At 1-5 the chain is on the lumenal side; it reads MGFWS. Residues 6–26 traverse the membrane as a helical segment; sequence LLEVASMPVIQVLFMSLVGAF. The Cytoplasmic segment spans residues 27-45; the sequence is MASDRCKLFPVEARNSMNK. The helical transmembrane segment at 46-66 threads the bilayer; that stretch reads VVFVLFAPALMFANLAQTVTL. Topologically, residues 67–73 are lumenal; the sequence is EDIISWW. The chain crosses the membrane as a helical span at residues 74-94; that stretch reads FMPVNMGLTFLIGGLLGWLVV. The Cytoplasmic segment spans residues 95–106; it reads KILKPPPYLEGL. The chain crosses the membrane as a helical span at residues 107–127; that stretch reads IVATCSAGNMGNLPIILVPAI. At 128-144 the chain is on the lumenal side; it reads CDEDKSPFGNRSVCRTV. The chain crosses the membrane as a helical span at residues 145-165; it reads GLSYASFSMALGGFYIWTYTF. Residues 166-229 are Cytoplasmic-facing; sequence RLIKGSAMKV…WRKGVDFLHE (64 aa). The helical transmembrane segment at 230–250 threads the bilayer; sequence ILEELLAPPTLGAIIGFIFGA. Over 251 to 273 the chain is Lumenal; that stretch reads VRWLRNLIIGDDAPLRIVQSTAK. The chain crosses the membrane as a helical span at residues 274–294; that stretch reads LLGDGTIPCMTIILGGNLIQG. Residues 295–312 are Cytoplasmic-facing; the sequence is LRSSAVKPMVVLGIVCVR. The helical transmembrane segment at 313–333 threads the bilayer; sequence YIAMPIIGIGIVLTAANLGFL. At 334-337 the chain is on the lumenal side; sequence PADP. Residues 338 to 358 form a helical membrane-spanning segment; the sequence is LFQYVLMLQFTLPPAMNIGTM. Residues 359–370 are Cytoplasmic-facing; the sequence is TQLYNVAQDECS. A helical transmembrane segment spans residues 371-391; sequence VLMLWTYLVAILALTVWSTIF. Over 392-396 the chain is Lumenal; it reads LHLLV.

The protein belongs to the auxin efflux carrier (TC 2.A.69.2) family. Expressed in seedlings, cauline leaves and flowers.

It localises to the endoplasmic reticulum membrane. Its function is as follows. Involved in cellular auxin homeostasis by regulating auxin metabolism. Regulates intracellular auxin accumulation at the endoplasmic reticulum and thus auxin availability for nuclear auxin signaling. The protein is Protein PIN-LIKES 5 of Arabidopsis thaliana (Mouse-ear cress).